Consider the following 298-residue polypeptide: (S)-ureidoglycine aminohydrolase (298 aa).

Positions 1–20 are cleaved as a signal peptide; that stretch reads MRSLYLIVFIVISLVKASKS. The region spanning 222-288 is the Cupin type-2 domain; that stretch reads TMDFQPGEFL…ALGKTRSRYL (67 aa). Mn(2+) contacts are provided by glutamate 235, histidine 237, histidine 241, and glutamine 275. Substrate is bound at residue glutamate 235. 3 residues coordinate substrate: glutamine 275, tyrosine 287, and lysine 291.

Belongs to the UGHY family. As to quaternary structure, homooctamer. It depends on Mn(2+) as a cofactor.

Its subcellular location is the endoplasmic reticulum. It catalyses the reaction (S)-2-ureidoglycine + H2O = (S)-ureidoglycolate + NH4(+). Its function is as follows. Involved in the catabolism of purine nucleotides. Can use (S)-2-ureidoglycine as substrate, but not allantoate. The sequential activity of AAH, UGLYAH and UAH allows a complete purine breakdown without the intermediate generation of urea. This chain is (S)-ureidoglycine aminohydrolase (UGLYAH), found in Arabidopsis thaliana (Mouse-ear cress).